Reading from the N-terminus, the 644-residue chain is Threonine--tRNA ligase (644 aa).

Residues 1-61 (MPVITLPDGS…EKDTKLTIIT (61 aa)) form the TGS domain. Residues 242–535 (DHRRIGADLD…LIEHYEGKFP (294 aa)) are catalytic. 3 residues coordinate Zn(2+): cysteine 335, histidine 386, and histidine 512.

The protein belongs to the class-II aminoacyl-tRNA synthetase family. In terms of assembly, homodimer. Zn(2+) serves as cofactor.

The protein resides in the cytoplasm. The catalysed reaction is tRNA(Thr) + L-threonine + ATP = L-threonyl-tRNA(Thr) + AMP + diphosphate + H(+). In terms of biological role, catalyzes the attachment of threonine to tRNA(Thr) in a two-step reaction: L-threonine is first activated by ATP to form Thr-AMP and then transferred to the acceptor end of tRNA(Thr). Also edits incorrectly charged L-seryl-tRNA(Thr). The protein is Threonine--tRNA ligase of Nitrosococcus oceani (strain ATCC 19707 / BCRC 17464 / JCM 30415 / NCIMB 11848 / C-107).